We begin with the raw amino-acid sequence, 175 residues long: Nucleoside diphosphate kinase 6 (175 aa).

The ATP site is built by lysine 15, phenylalanine 63, arginine 91, threonine 97, arginine 111, and asparagine 121. Residue histidine 124 is the Pros-phosphohistidine intermediate of the active site.

This sequence belongs to the NDK family. Requires Mg(2+) as cofactor.

The enzyme catalyses a 2'-deoxyribonucleoside 5'-diphosphate + ATP = a 2'-deoxyribonucleoside 5'-triphosphate + ADP. The catalysed reaction is a ribonucleoside 5'-diphosphate + ATP = a ribonucleoside 5'-triphosphate + ADP. Major role in the synthesis of nucleoside triphosphates other than ATP. The ATP gamma phosphate is transferred to the NDP beta phosphate via a ping-pong mechanism, using a phosphorylated active-site intermediate. In Danio rerio (Zebrafish), this protein is Nucleoside diphosphate kinase 6 (nme6).